A 444-amino-acid polypeptide reads, in one-letter code: ATP-dependent protease ATPase subunit HslU (444 aa).

ATP-binding positions include I18 and 60–65 (GVGKTE). The segment at 143–163 (WGEVENHDSHSSTRQAFRKKL) is disordered. The ATP site is built by D257, E322, and R394.

The protein belongs to the ClpX chaperone family. HslU subfamily. A double ring-shaped homohexamer of HslV is capped on each side by a ring-shaped HslU homohexamer. The assembly of the HslU/HslV complex is dependent on binding of ATP.

Its subcellular location is the cytoplasm. ATPase subunit of a proteasome-like degradation complex; this subunit has chaperone activity. The binding of ATP and its subsequent hydrolysis by HslU are essential for unfolding of protein substrates subsequently hydrolyzed by HslV. HslU recognizes the N-terminal part of its protein substrates and unfolds these before they are guided to HslV for hydrolysis. The polypeptide is ATP-dependent protease ATPase subunit HslU (Haemophilus influenzae (strain 86-028NP)).